The sequence spans 576 residues: Plant intracellular Ras-group-related LRR protein 4 (576 aa).

Residues 130-151 show a composition bias toward low complexity; it reads AAPAAATTTTSTAAAGSSSSSA. The tract at residues 130–181 is disordered; it reads AAPAAATTTTSTAAAGSSSSSAVGNAERHASSGTNGFTASRVAGTSTSTGRV. The span at 160 to 180 shows a compositional bias: polar residues; the sequence is SSGTNGFTASRVAGTSTSTGR. 11 LRR repeats span residues 272-295, 296-318, 320-341, 342-364, 366-387, 389-410, 411-433, 434-456, 458-481, 482-503, and 505-527; these read LTGLVTLDISENRLLALPDAIGKL, FSLAKLDIHANRISQLPESIGDL, SLIYLNMRGNQLSSLPSSIGRL, LNLEELDVGSNGLSSLPDSIGSL, RLKKLIVETNDLDELPYTIGHC, SLVELQAGYNHLKALPEAVGKL, EPLEILSVRYNNLRSLPTTMASL, TKLKEVDVSFNELESIPENFCFA, SLIKLNVGNNFADLQYLPRSIGNL, EMLEELDMSNNQIRVLPDSFGN, and KHLRVLRAEENPLQVPPRDIALK. The GVYW; degenerate motif lies at 528-535; the sequence is GAQAVVQY.

The protein belongs to the SHOC2 family. Widely expressed.

Leucine-rich repeat protein that likely mediates protein interactions, possibly in the context of signal transduction. This Oryza sativa subsp. japonica (Rice) protein is Plant intracellular Ras-group-related LRR protein 4 (IRL4).